Here is a 135-residue protein sequence, read N- to C-terminus: Ribonuclease VapC5 (135 aa).

A PINc domain is found at 9–130 (VLDTSVFIAT…FAALDGAASV (122 aa)). 2 residues coordinate Mg(2+): aspartate 11 and aspartate 100.

The protein belongs to the PINc/VapC protein family. As to quaternary structure, forms a complex with VapB5. Mg(2+) is required as a cofactor.

It is found in the secreted. In terms of biological role, probable toxic component of a type II toxin-antitoxin (TA) system. The cognate antitoxin is VapB5. Has limited RNase activity on substrates; activity is seen with a VapC5-VapB5 complex. The chain is Ribonuclease VapC5 from Mycobacterium tuberculosis (strain ATCC 25618 / H37Rv).